The primary structure comprises 521 residues: MSSDSDRQCPVDGDIDQQEMIPSKKNAVLVDGVVLNGPTTDAKAGEKFVEEACRLIMEEVVLKATDVNEKVCEWRPPEQLKQLLDLEMRDSGEPPHKLLELCRDVIHYSVKTNHPRFFNQLYAGLDYYSLVARFMTEALNPSVYTYEVSPVFLLVEEAVLKKMIEFIGWKEGDGIFNPGGSVSNMYAMNLARYKYCPDIKEKGLSGSPRLILFTSAECHYSMKKAASFLGIGTENVCFVETDGRGKMIPEELEKQVWQARKEGAAPFLVCATSGTTVLGAFDPLDEIADICERHSLWLHVDASWGGSALMSRKHRKLLHGIHRADSVAWNPHKMLMAGIQCCALLVKDKSDLLKKCYSAKASYLFQQDKFYDVSYDTGDKSIQCSRRPDAFKFWMTWKALGTLGLEERVNRALALSRYLVDEIKKREGFKLLMEPEYANICFWYIPPSLREMEEGPEFWAKLNLVAPAIKERMMKKGSLMLGYQPHRGKVNFFRQVVISPQVSREDMDFLLDEIDLLGKDM.

An N6-(pyridoxal phosphate)lysine modification is found at K333.

The protein belongs to the group II decarboxylase family. As to quaternary structure, homodimer. Requires pyridoxal 5'-phosphate as cofactor. As to expression, expressed very weakly in neurons and not detected in astrocytes, brain or liver.

The enzyme catalyses L-aspartate + H(+) = beta-alanine + CO2. It carries out the reaction 3-sulfino-L-alanine + H(+) = hypotaurine + CO2. It catalyses the reaction L-cysteate + H(+) = taurine + CO2. Its function is as follows. May catalyze the decarboxylation of L-aspartate, 3-sulfino-L-alanine (cysteine sulfinic acid), and L-cysteate to beta-alanine, hypotaurine and taurine, respectively. Does not exhibit any decarboxylation activity toward glutamate. The sequence is that of Acidic amino acid decarboxylase GADL1 (GADL1) from Homo sapiens (Human).